Consider the following 369-residue polypeptide: Peptide chain release factor 2 (369 aa).

At Q250 the chain carries N5-methylglutamine.

It belongs to the prokaryotic/mitochondrial release factor family. Methylated by PrmC. Methylation increases the termination efficiency of RF2.

The protein resides in the cytoplasm. Its function is as follows. Peptide chain release factor 2 directs the termination of translation in response to the peptide chain termination codons UGA and UAA. This chain is Peptide chain release factor 2 (prfB), found in Rickettsia typhi (strain ATCC VR-144 / Wilmington).